Here is a 575-residue protein sequence, read N- to C-terminus: Epsin-1 (575 aa).

A 1,2-diacyl-sn-glycero-3-phospho-(1D-myo-inositol-4,5-bisphosphate) is bound by residues arginine 8, lysine 11, arginine 25, asparagine 30, arginine 63, and histidine 73. The region spanning 12 to 144 (NIVHNYSEAE…RDEDRLREER (133 aa)) is the ENTH domain. Residues 149 to 186 (KTKEKLAQTATASSAAVGSGPPPEAEQAWPQSSGEEEL) form a disordered region. The span at 157–167 (TATASSAAVGS) shows a compositional bias: low complexity. 3 consecutive UIM domains span residues 183 to 202 (EEEL…ADQP), 208 to 227 (EDDV…HDKE), and 233 to 252 (GDDL…TGGK). Disordered regions lie at residues 264 to 283 (FTTP…ASVP) and 293 to 575 (SDPW…PFLL). 8 repeat units span residues 274-276 (DPW), 294-296 (DPW), 306-308 (DPW), 319-321 (DPW), 332-334 (DPW), 349-351 (DPW), 367-369 (DPW), and 377-379 (DPW). The interval 274 to 379 (DPWGGPASVP…APAPAFSDPW (106 aa)) is 8 X 3 AA repeats of D-P-W. The segment covering 306–316 (DPWGGAAPTPA) has biased composition (low complexity). Residues 333 to 346 (PWGGTPAPAAGEGP) are compositionally biased toward low complexity. The span at 367 to 379 (DPWAPAPAFSDPW) shows a compositional bias: low complexity. Phosphoserine is present on serine 382. Residues 401–410 (DEFSDFDRLR) carry the [DE]-X(1,2)-F-X-X-[FL]-X-X-X-R motif motif. Serine 418 and serine 419 each carry phosphoserine. A Phosphothreonine modification is found at threonine 420. Serine 434, serine 446, and serine 453 each carry phosphoserine. Pro residues predominate over residues 453–467 (SPPPAATPTPTPPTR). Phosphothreonine is present on residues threonine 459, threonine 463, and threonine 469. Serine 472 bears the Phosphoserine mark. Threonine 493 is modified (phosphothreonine). A run of 2 repeats spans residues 501 to 503 (NPF) and 517 to 519 (NPF). Residues 501-573 (NPFLPSGAPA…GPPAPNTNPF (73 aa)) are 3 X 3 AA repeats of N-P-F. Arginine 533 bears the Omega-N-methylarginine mark. Pro residues predominate over residues 556 to 569 (GLPPMMPPGPPAPN). Repeat 3 spans residues 571–573 (NPF).

Belongs to the epsin family. As to quaternary structure, monomer. Binds ITSN1. Binds clathrin, ZBTB16/ZNF145, AP2A1 and AP2A2. Binds ubiquitinated proteins. Interacts with RALBP1 in a complex also containing NUMB and TFAP2A during interphase and mitosis. Interacts with AP2B1. Interacts with UBQLN2. Interacts with REPS2; the interaction is direct. Interacts with EPS15; the interaction is direct. Interacts with ENTREP1. Ubiquitinated. Post-translationally, phosphorylated on serine and/or threonine residues in mitotic cells. Phosphorylation reduces interaction with REPS2, AP-2 and the membrane fraction. Depolarization of synaptosomes results in dephosphorylation. As to expression, ubiquitously expressed. Detected in liver, spleen and testis, and weakly in lung and thymus (at protein level).

It localises to the cytoplasm. It is found in the cell membrane. The protein resides in the nucleus. The protein localises to the membrane. Its subcellular location is the clathrin-coated pit. Functionally, binds to membranes enriched in phosphatidylinositol 4,5-bisphosphate (PtdIns(4,5)P2). Modifies membrane curvature and facilitates the formation of clathrin-coated invaginations. Regulates receptor-mediated endocytosis. This chain is Epsin-1 (Epn1), found in Rattus norvegicus (Rat).